Here is a 636-residue protein sequence, read N- to C-terminus: p-hydroxybenzoate-m-hydroxylase A (636 aa).

FAD-binding positions include D10–N39, R241–Y243, Y289, and D310. A helical transmembrane segment spans residues I11–S28.

The protein belongs to the PheA/TfdB FAD monooxygenase family. The cofactor is FAD.

The protein resides in the membrane. It catalyses the reaction 4-hydroxybenzoate + NADH + O2 + H(+) = 3,4-dihydroxybenzoate + NAD(+) + H2O. The catalysed reaction is 4-hydroxybenzoate + NADPH + O2 + H(+) = 3,4-dihydroxybenzoate + NADP(+) + H2O. Its function is as follows. FAD-dependent monooxygenase; part of the benzoic acid degradation pathway also known as the protocatechuic acid pathway. Benzoic acid debradation begins with the conversion of benzoic acid into 4-hydroxybenzoic acid through hydroxylation by the benzoate-4-monooxygenase bphA, and its partner NADPH-cytochrome P450 reductase cprA which act as a mediator in electron donation from NADPH. 4-Hydroxybenzoic acid is then converted into 3,4-dihydroxybenzoic acid (also called protocatechuic acid) by the p-hydroxybenzoate-m-hydroxylase phhA. Protocatechuic acid is converted into 3-carboxy-cis,cis-muconic acid by the intradiol ring-cleavage dioxygenase prcA, which is further metabolized through the 3-oxoadipate pathway to finally enter the tricarboxylic acid cycle (TCA). The protein is p-hydroxybenzoate-m-hydroxylase A of Aspergillus niger (strain ATCC MYA-4892 / CBS 513.88 / FGSC A1513).